Reading from the N-terminus, the 316-residue chain is Pantothenate kinase (316 aa).

95–102 (GSVAVGKS) is an ATP binding site.

This sequence belongs to the prokaryotic pantothenate kinase family.

The protein localises to the cytoplasm. It catalyses the reaction (R)-pantothenate + ATP = (R)-4'-phosphopantothenate + ADP + H(+). It participates in cofactor biosynthesis; coenzyme A biosynthesis; CoA from (R)-pantothenate: step 1/5. The protein is Pantothenate kinase of Shewanella putrefaciens (strain CN-32 / ATCC BAA-453).